The chain runs to 539 residues: UDP-N-acetylmuramate--L-alanine ligase (539 aa).

165–171 is a binding site for ATP; that stretch reads GTHGKTT.

Belongs to the MurCDEF family.

Its subcellular location is the cytoplasm. The catalysed reaction is UDP-N-acetyl-alpha-D-muramate + L-alanine + ATP = UDP-N-acetyl-alpha-D-muramoyl-L-alanine + ADP + phosphate + H(+). The protein operates within cell wall biogenesis; peptidoglycan biosynthesis. Its function is as follows. Cell wall formation. The protein is UDP-N-acetylmuramate--L-alanine ligase of Trichodesmium erythraeum (strain IMS101).